Reading from the N-terminus, the 483-residue chain is Zinc metalloproteinase/disintegrin (483 aa).

A signal peptide spans 1–20 (MIQVLLVTVCLAVFPYQGSS). A propeptide spanning residues 21 to 190 (IILESGNVND…KASQLYLTPE (170 aa)) is cleaved from the precursor. One can recognise a Peptidase M12B domain in the interval 197–395 (RYVKLAIVVD…YKPQCILNAP (199 aa)). Cystine bridges form between Cys308/Cys390, Cys352/Cys374, and Cys354/Cys357. Zn(2+) is bound at residue His333. Glu334 is a catalytic residue. Positions 337 and 343 each coordinate Zn(2+). Positions 396–411 (LRTDTVSTPVSGNELL) are excised as a propeptide. In terms of domain architecture, Disintegrin spans 403–483 (TPVSGNELLE…SDDCPRWNDL (81 aa)). Intrachain disulfides connect Cys417-Cys432, Cys419-Cys427, Cys426-Cys449, Cys440-Cys446, Cys445-Cys470, and Cys458-Cys477. Residues 462–464 (RGD) carry the Cell attachment site motif.

This sequence belongs to the venom metalloproteinase (M12B) family. P-II subfamily. P-IIa sub-subfamily. As to quaternary structure, monomer. Requires Zn(2+) as cofactor. Expressed by the venom gland.

It is found in the secreted. Functionally, impairs hemostasis in the envenomed animal. Inhibits ADP- and collagen-induced human platelet aggregation with IC(50) of 123 and 135 nM, respectively. Inhibits sperm-egg binding in a concentration-dependent manner, but has no effect on the fusion of sperm-egg. This is Zinc metalloproteinase/disintegrin from Protobothrops jerdonii (Jerdon's pitviper).